A 149-amino-acid polypeptide reads, in one-letter code: Transcription antitermination protein NusB (149 aa).

It belongs to the NusB family.

In terms of biological role, involved in transcription antitermination. Required for transcription of ribosomal RNA (rRNA) genes. Binds specifically to the boxA antiterminator sequence of the ribosomal RNA (rrn) operons. The protein is Transcription antitermination protein NusB of Acinetobacter baumannii (strain AB307-0294).